The following is a 369-amino-acid chain: Putative cyclin-F1-1 (369 aa).

Residues 328-350 (AQHHLESKPAGAAGVGINSSGDD) are disordered.

The protein belongs to the cyclin family. Cyclin F subfamily.

The protein is Putative cyclin-F1-1 (CYCF1-1) of Oryza sativa subsp. japonica (Rice).